The sequence spans 344 residues: tRNA N6-adenosine threonylcarbamoyltransferase (344 aa).

Positions 112 and 116 each coordinate Fe cation. Substrate is bound by residues 134–138 (LASGG), D167, G180, and N280. D308 is a Fe cation binding site.

Belongs to the KAE1 / TsaD family. Fe(2+) is required as a cofactor.

The protein resides in the cytoplasm. It carries out the reaction L-threonylcarbamoyladenylate + adenosine(37) in tRNA = N(6)-L-threonylcarbamoyladenosine(37) in tRNA + AMP + H(+). Functionally, required for the formation of a threonylcarbamoyl group on adenosine at position 37 (t(6)A37) in tRNAs that read codons beginning with adenine. Is involved in the transfer of the threonylcarbamoyl moiety of threonylcarbamoyl-AMP (TC-AMP) to the N6 group of A37, together with TsaE and TsaB. TsaD likely plays a direct catalytic role in this reaction. The polypeptide is tRNA N6-adenosine threonylcarbamoyltransferase (Rickettsia conorii (strain ATCC VR-613 / Malish 7)).